A 296-amino-acid chain; its full sequence is Small ribosomal subunit protein uS2m (296 aa).

The disordered stretch occupies residues 274–296 (QGQKEPGDQGPAHPPGADMSHSL).

It belongs to the universal ribosomal protein uS2 family. As to quaternary structure, component of the mitochondrial small ribosomal subunit (mt-SSU). Mature mammalian 55S mitochondrial ribosomes consist of a small (28S) and a large (39S) subunit. The 28S small subunit contains a 12S ribosomal RNA (12S mt-rRNA) and 30 different proteins. The 39S large subunit contains a 16S rRNA (16S mt-rRNA), a copy of mitochondrial valine transfer RNA (mt-tRNA(Val)), which plays an integral structural role, and 52 different proteins.

Its subcellular location is the mitochondrion. In terms of biological role, required for mitoribosome formation and stability, and mitochondrial translation. This is Small ribosomal subunit protein uS2m (MRPS2) from Homo sapiens (Human).